The following is a 253-amino-acid chain: 1-(5-phosphoribosyl)-5-[(5-phosphoribosylamino)methylideneamino] imidazole-4-carboxamide isomerase (253 aa).

Asp-8 (proton acceptor) is an active-site residue. Asp-131 (proton donor) is an active-site residue.

The protein belongs to the HisA/HisF family.

The protein resides in the cytoplasm. The catalysed reaction is 1-(5-phospho-beta-D-ribosyl)-5-[(5-phospho-beta-D-ribosylamino)methylideneamino]imidazole-4-carboxamide = 5-[(5-phospho-1-deoxy-D-ribulos-1-ylimino)methylamino]-1-(5-phospho-beta-D-ribosyl)imidazole-4-carboxamide. It functions in the pathway amino-acid biosynthesis; L-histidine biosynthesis; L-histidine from 5-phospho-alpha-D-ribose 1-diphosphate: step 4/9. This Polynucleobacter necessarius subsp. necessarius (strain STIR1) protein is 1-(5-phosphoribosyl)-5-[(5-phosphoribosylamino)methylideneamino] imidazole-4-carboxamide isomerase.